Reading from the N-terminus, the 336-residue chain is Malate dehydrogenase, cytoplasmic (336 aa).

NAD(+) contacts are provided by residues 11 to 17 (GAAGQIG) and Asp42. Residues Arg92 and Arg98 each contribute to the substrate site. NAD(+)-binding positions include Asn105, Gln112, and 129–131 (VGN). Positions 131 and 163 each coordinate substrate. The active-site Proton acceptor is the His188.

The protein belongs to the LDH/MDH superfamily. MDH type 2 family. Homodimer.

Its subcellular location is the cytoplasm. The enzyme catalyses (S)-malate + NAD(+) = oxaloacetate + NADH + H(+). In terms of biological role, catalyzes the reversible conversion of (S)-malate to oxaloacetate in the cytoplasm where oxaloacetate is used for gluconeogenesis. The chain is Malate dehydrogenase, cytoplasmic from Caenorhabditis elegans.